The chain runs to 115 residues: MNNITKLMKQKNILTPPLPLYRRVLRAHRYHLGAEERALGDEYVKAEFRRHRNVTNPLHLVGFLSSWERYADALENESWKQEKYSNTDLLESLNDQQIGQLYELSKALQEQKKSE.

Belongs to the complex I LYR family. SDHAF3 subfamily. In terms of assembly, interacts with sdh2 within an sdh1-sdh2 subcomplex.

The protein localises to the mitochondrion matrix. Plays an essential role in the assembly of succinate dehydrogenase (SDH), an enzyme complex (also referred to as respiratory complex II) that is a component of both the tricarboxylic acid (TCA) cycle and the mitochondrial electron transport chain, and which couples the oxidation of succinate to fumarate with the reduction of ubiquinone (coenzyme Q) to ubiquinol. Promotes maturation of the iron-sulfur protein subunit sdh2 of the SDH catalytic dimer, protecting it from the deleterious effects of oxidants. May act together with SDHAF1. The sequence is that of Succinate dehydrogenase assembly factor 3, mitochondrial from Schizosaccharomyces pombe (strain 972 / ATCC 24843) (Fission yeast).